The chain runs to 1253 residues: Elongator complex protein 1 (1253 aa).

The interval 830–1253 is mediates dimerization; the sequence is VDVNMLFDHA…KPFEKLSILI (424 aa). Over residues 1126 to 1141 the composition is skewed to polar residues; that stretch reads YTKSSNSSKMTRNTSK. A disordered region spans residues 1126-1153; the sequence is YTKSSNSSKMTRNTSKNNRRLERKRARG. The tract at residues 1137–1155 is required for binding to tRNA; sequence RNTSKNNRRLERKRARGKK. Over residues 1142 to 1153 the composition is skewed to basic residues; it reads NNRRLERKRARG.

It belongs to the ELP1/IKA1 family. In terms of assembly, homodimer. Component of the elongator complex.

The protein resides in the cytoplasm. Its pathway is tRNA modification; 5-methoxycarbonylmethyl-2-thiouridine-tRNA biosynthesis. In terms of biological role, component of the elongator complex, a multiprotein complex which is required for multiple tRNA modifications, including mcm5U (5-methoxycarbonylmethyl uridine), mcm5s2U (5-methoxycarbonylmethyl-2-thiouridine), and ncm5U (5-carbamoylmethyl uridine). The elongator complex catalyzes formation of carboxymethyluridine in the wobble base at position 34 in tRNAs. ELP1 binds to tRNA, mediating interaction of the elongator complex with tRNA. The polypeptide is Elongator complex protein 1 (Schizosaccharomyces pombe (strain 972 / ATCC 24843) (Fission yeast)).